The sequence spans 120 residues: Small ribosomal subunit protein uS12 (120 aa).

Residue aspartate 88 is modified to 3-methylthioaspartic acid.

The protein belongs to the universal ribosomal protein uS12 family. In terms of assembly, part of the 30S ribosomal subunit. Contacts proteins S8 and S17. May interact with IF1 in the 30S initiation complex.

In terms of biological role, with S4 and S5 plays an important role in translational accuracy. Its function is as follows. Interacts with and stabilizes bases of the 16S rRNA that are involved in tRNA selection in the A site and with the mRNA backbone. Located at the interface of the 30S and 50S subunits, it traverses the body of the 30S subunit contacting proteins on the other side and probably holding the rRNA structure together. The combined cluster of proteins S8, S12 and S17 appears to hold together the shoulder and platform of the 30S subunit. The sequence is that of Small ribosomal subunit protein uS12 from Carsonella ruddii (strain PV).